A 264-amino-acid chain; its full sequence is tRNA (guanine-N(1)-)-methyltransferase (264 aa).

149–154 provides a ligand contact to S-adenosyl-L-methionine; sequence IGDYVL.

It belongs to the RNA methyltransferase TrmD family. As to quaternary structure, homodimer.

The protein resides in the cytoplasm. It carries out the reaction guanosine(37) in tRNA + S-adenosyl-L-methionine = N(1)-methylguanosine(37) in tRNA + S-adenosyl-L-homocysteine + H(+). In terms of biological role, specifically methylates guanosine-37 in various tRNAs. In Methylobacillus flagellatus (strain ATCC 51484 / DSM 6875 / VKM B-1610 / KT), this protein is tRNA (guanine-N(1)-)-methyltransferase.